The primary structure comprises 379 residues: Chaperone protein DnaJ (379 aa).

Positions Asp-5–Gly-70 constitute a J domain. The segment at Gly-135 to Thr-213 adopts a CR-type zinc-finger fold. The Zn(2+) site is built by Cys-148, Cys-151, Cys-165, Cys-168, Cys-187, Cys-190, Cys-201, and Cys-204. 4 CXXCXGXG motif repeats span residues Cys-148–Gly-155, Cys-165–Gly-172, Cys-187–Gly-194, and Cys-201–Gly-208.

Belongs to the DnaJ family. As to quaternary structure, homodimer. Zn(2+) serves as cofactor.

Its subcellular location is the cytoplasm. In terms of biological role, participates actively in the response to hyperosmotic and heat shock by preventing the aggregation of stress-denatured proteins and by disaggregating proteins, also in an autonomous, DnaK-independent fashion. Unfolded proteins bind initially to DnaJ; upon interaction with the DnaJ-bound protein, DnaK hydrolyzes its bound ATP, resulting in the formation of a stable complex. GrpE releases ADP from DnaK; ATP binding to DnaK triggers the release of the substrate protein, thus completing the reaction cycle. Several rounds of ATP-dependent interactions between DnaJ, DnaK and GrpE are required for fully efficient folding. Also involved, together with DnaK and GrpE, in the DNA replication of plasmids through activation of initiation proteins. This is Chaperone protein DnaJ from Colwellia maris.